A 119-amino-acid polypeptide reads, in one-letter code: Large ribosomal subunit protein uL18 (119 aa).

The protein belongs to the universal ribosomal protein uL18 family. As to quaternary structure, part of the 50S ribosomal subunit; part of the 5S rRNA/L5/L18/L25 subcomplex. Contacts the 5S and 23S rRNAs.

In terms of biological role, this is one of the proteins that bind and probably mediate the attachment of the 5S RNA into the large ribosomal subunit, where it forms part of the central protuberance. The chain is Large ribosomal subunit protein uL18 from Staphylococcus aureus (strain Mu3 / ATCC 700698).